The following is a 382-amino-acid chain: Galactokinase (382 aa).

E34–D37 is a substrate binding site. G124–S130 serves as a coordination point for ATP. Mg(2+) is bound by residues S130 and E162. Catalysis depends on D174, which acts as the Proton acceptor. Y223 lines the substrate pocket.

Belongs to the GHMP kinase family. GalK subfamily.

The protein localises to the cytoplasm. The enzyme catalyses alpha-D-galactose + ATP = alpha-D-galactose 1-phosphate + ADP + H(+). It functions in the pathway carbohydrate metabolism; galactose metabolism. Its function is as follows. Catalyzes the transfer of the gamma-phosphate of ATP to D-galactose to form alpha-D-galactose-1-phosphate (Gal-1-P). This is Galactokinase from Salmonella agona (strain SL483).